Here is a 299-residue protein sequence, read N- to C-terminus: Quinolinate synthase (299 aa).

Residues His21 and Ser38 each contribute to the iminosuccinate site. Cys83 provides a ligand contact to [4Fe-4S] cluster. Residues 109 to 111 (YVN) and Ser126 each bind iminosuccinate. Cys170 serves as a coordination point for [4Fe-4S] cluster. Residues 196–198 (HPE) and Thr213 each bind iminosuccinate. A [4Fe-4S] cluster-binding site is contributed by Cys256.

The protein belongs to the quinolinate synthase family. Type 2 subfamily. [4Fe-4S] cluster serves as cofactor.

It localises to the cytoplasm. It carries out the reaction iminosuccinate + dihydroxyacetone phosphate = quinolinate + phosphate + 2 H2O + H(+). It participates in cofactor biosynthesis; NAD(+) biosynthesis; quinolinate from iminoaspartate: step 1/1. Catalyzes the condensation of iminoaspartate with dihydroxyacetone phosphate to form quinolinate. This Pyrococcus abyssi (strain GE5 / Orsay) protein is Quinolinate synthase.